A 332-amino-acid polypeptide reads, in one-letter code: Methionyl-tRNA formyltransferase (332 aa).

124 to 127 (SLLP) is a binding site for (6S)-5,6,7,8-tetrahydrofolate.

Belongs to the Fmt family.

It carries out the reaction L-methionyl-tRNA(fMet) + (6R)-10-formyltetrahydrofolate = N-formyl-L-methionyl-tRNA(fMet) + (6S)-5,6,7,8-tetrahydrofolate + H(+). Attaches a formyl group to the free amino group of methionyl-tRNA(fMet). The formyl group appears to play a dual role in the initiator identity of N-formylmethionyl-tRNA by promoting its recognition by IF2 and preventing the misappropriation of this tRNA by the elongation apparatus. This chain is Methionyl-tRNA formyltransferase, found in Polynucleobacter necessarius subsp. necessarius (strain STIR1).